Reading from the N-terminus, the 895-residue chain is Eukaryotic translation initiation factor 3 subunit C (895 aa).

The segment at 1 to 108 (MSGFFRKVGD…DSDSEEEVKK (108 aa)) is disordered. 2 stretches are compositionally biased toward acidic residues: residues 11–31 (SDSESDISSSEEELSELESGD) and 52–75 (DDSDSDDDDSDDDDQDSLDSDDDN). Residues 638–812 (FHMHINLELL…NVVSFHRLEL (175 aa)) enclose the PCI domain. The segment covering 838-860 (DAKLGEGKEQRSGAGGERGDREG) has biased composition (basic and acidic residues). The tract at residues 838 to 895 (DAKLGEGKEQRSGAGGERGDREGGQPGGRRERRGGSAARGRGRGRGRAQQFQALGQKV) is disordered. Residues 884–895 (RAQQFQALGQKV) show a composition bias toward low complexity.

Belongs to the eIF-3 subunit C family. In terms of assembly, component of the eukaryotic translation initiation factor 3 (eIF-3) complex.

Its subcellular location is the cytoplasm. In terms of biological role, component of the eukaryotic translation initiation factor 3 (eIF-3) complex, which is involved in protein synthesis of a specialized repertoire of mRNAs and, together with other initiation factors, stimulates binding of mRNA and methionyl-tRNAi to the 40S ribosome. The eIF-3 complex specifically targets and initiates translation of a subset of mRNAs involved in cell proliferation. This Mycosarcoma maydis (Corn smut fungus) protein is Eukaryotic translation initiation factor 3 subunit C.